The following is a 434-amino-acid chain: Probable G-protein coupled receptor B0563.6 (434 aa).

The N-linked (GlcNAc...) asparagine glycan is linked to Asn-12. Helical transmembrane passes span 30–50 (VLPCICAIGIVGNITNLMVLA) and 65–85 (LAVADLLCMLFVLVFVSTEYL). Asn-88 is a glycosylation site (N-linked (GlcNAc...) asparagine). Transmembrane regions (helical) follow at residues 105 to 125 (LMLTLINWALGAGVYVVVALS) and 147 to 167 (ATRAIVIAFLIPAIFYVPYAI). Asn-181 carries N-linked (GlcNAc...) asparagine glycosylation. 2 helical membrane passes run 208-228 (ILRFLPIIILTVLNIQIMIAF) and 258-278 (GGTVLMSLVCNIPAAINLLLI). 2 N-linked (GlcNAc...) asparagine glycosylation sites follow: Asn-429 and Asn-430.

This sequence belongs to the G-protein coupled receptor 1 family.

It is found in the cell membrane. In terms of biological role, not known. Putative receptor. The chain is Probable G-protein coupled receptor B0563.6 from Caenorhabditis elegans.